Reading from the N-terminus, the 340-residue chain is Guanine nucleotide-binding protein G(I)/G(S)/G(T) subunit beta-2 (340 aa).

S2 carries the post-translational modification N-acetylserine. 7 WD repeats span residues 53–83, 95–125, 141–170, 182–212, 224–254, 268–298, and 310–340; these read GHLA…IIWD, LRSS…SIYS, GHTG…ALWD, GHSG…KLWD, GHES…RLFD, NIIC…NIWD, and GHDN…KIWN. Phosphotyrosine is present on Y239.

Belongs to the WD repeat G protein beta family. As to quaternary structure, g proteins are composed of 3 units, alpha, beta and gamma. In this context, interacts with GNAI2 and GNG2. Interacts with ARHGEF18 and RASD2. Interacts with ATXN10. Interacts with SCN8A. Expressed in all cardiac subcompartments and in the brain, with highest levels in the atrioventricular node and brain.

It is found in the cytoplasm. The protein resides in the perinuclear region. The protein localises to the cell membrane. Functionally, guanine nucleotide-binding proteins (G proteins) are involved as a modulator or transducer in various transmembrane signaling systems. The beta and gamma chains are required for the GTPase activity, for replacement of GDP by GTP, and for G protein-effector interaction. The polypeptide is Guanine nucleotide-binding protein G(I)/G(S)/G(T) subunit beta-2 (GNB2) (Homo sapiens (Human)).